The chain runs to 90 residues: Small ribosomal subunit protein bS18 (90 aa).

It belongs to the bacterial ribosomal protein bS18 family. As to quaternary structure, part of the 30S ribosomal subunit. Forms a tight heterodimer with protein bS6.

Its function is as follows. Binds as a heterodimer with protein bS6 to the central domain of the 16S rRNA, where it helps stabilize the platform of the 30S subunit. In Bacteroides thetaiotaomicron (strain ATCC 29148 / DSM 2079 / JCM 5827 / CCUG 10774 / NCTC 10582 / VPI-5482 / E50), this protein is Small ribosomal subunit protein bS18.